The following is a 468-amino-acid chain: Trehalose-binding lipoprotein LpqY (468 aa).

An N-terminal signal peptide occupies residues 1 to 25; sequence MVMSRGRIPRLGAAVLVALTTAAAA. A lipid anchor (N-palmitoyl cysteine) is attached at cysteine 26. Cysteine 26 carries the S-diacylglycerol cysteine lipid modification. A disulfide bond links cysteine 54 and cysteine 372. Alpha,alpha-trehalose contacts are provided by aspartate 97, asparagine 151, tryptophan 276, phenylalanine 278, glycine 351, and arginine 421.

The protein belongs to the bacterial solute-binding protein 1 family. As to quaternary structure, monomer. The complex is composed of two ATP-binding proteins (SugC), two transmembrane proteins (SugA and SugB) and a solute-binding protein (LpqY).

The protein localises to the cell inner membrane. In terms of biological role, part of the ABC transporter complex LpqY-SugA-SugB-SugC, which is highly specific for uptake of trehalose. Involved in the recycling of extracellular trehalose released from trehalose-containing molecules synthesized by M.tuberculosis. Trehalose uptake is essential for virulence. The chain is Trehalose-binding lipoprotein LpqY (lpqY) from Mycobacterium tuberculosis (strain CDC 1551 / Oshkosh).